The following is a 150-amino-acid chain: Calmodulin-like protein 7 (150 aa).

4 EF-hand domains span residues methionine 1–tyrosine 36, isoleucine 37–glutamate 72, glutamate 75–lysine 110, and lysine 113–asparagine 148. Residues aspartate 14, asparagine 16, aspartate 18, threonine 20, glutamate 25, aspartate 50, asparagine 52, aspartate 54, cysteine 56, glutamate 61, aspartate 88, asparagine 90, aspartate 92, glutamate 99, aspartate 126, aspartate 128, aspartate 130, arginine 132, and glutamate 137 each contribute to the Ca(2+) site.

It belongs to the calmodulin family.

In terms of biological role, potential calcium sensor. In Arabidopsis thaliana (Mouse-ear cress), this protein is Calmodulin-like protein 7 (CML7).